The sequence spans 61 residues: Alpha-conotoxine-like Am1.3 (61 aa).

Residues 1-21 (MGMRMMFTVFLLVVLATTVVS) form the signal peptide. Residues 22 to 44 (FMSGRASHGRNAAASDLIALTIK) constitute a propeptide that is removed on maturation. Cysteine amide is present on C60.

This sequence belongs to the conotoxin A superfamily. Is not hydroxylated. Post-translationally, contains 2 disulfide bonds. As to expression, expressed by the venom duct.

Its subcellular location is the secreted. In terms of biological role, alpha-conotoxins act on postsynaptic membranes, they bind to the nicotinic acetylcholine receptors (nAChR) and thus inhibit them. This chain is Alpha-conotoxine-like Am1.3, found in Conus amadis (Amadis cone).